Consider the following 194-residue polypeptide: RxLR effector protein Avh240 (194 aa).

A signal peptide spans 1-23 (MRPYFTLLLALAFILACTNLVEA). The RxLR-dEER motif lies at 38-57 (RHLRTAVASVVDLPDDEDER). A host plasma membrane-binding region spans residues 58–108 (LLGYNTVQLWRMRRTANKLMNGKLTTQKEAALKKWMASQQDKFLAKWLKSS).

The protein belongs to the RxLR effector family. Homodimer. Interacts with host soybean aspartic protease AP1.

Its subcellular location is the secreted. The protein resides in the host cell membrane. Its function is as follows. Effector that suppresses plant defense responses during the early stages of pathogen infection. Suppresses cell death induced by effectors and PAMPs in plant hosts. Avh240 dimerizes and localizes at the plasma membrane to interfere with aspartic protease AP1 secretion, which presents an effective mechanism by which effector proteins suppress plant apoplastic immunity. This Phytophthora sojae (Soybean stem and root rot agent) protein is RxLR effector protein Avh240.